The following is a 372-amino-acid chain: Carbamoyl phosphate synthase small chain (372 aa).

Residues 1-182 are CPSase; that stretch reads MTLYCKRGYK…PKAPIVHLGN (182 aa). L-glutamine is bound by residues serine 53, glycine 234, and glycine 236. Residues 186–372 enclose the Glutamine amidotransferase type-1 domain; it reads TIVVVDCGVK…KFKKMVSRNA (187 aa). Cysteine 262 functions as the Nucleophile in the catalytic mechanism. The L-glutamine site is built by leucine 263, glutamine 266, asparagine 304, glycine 306, and tyrosine 307. Residues histidine 347 and glutamate 349 contribute to the active site.

The protein belongs to the CarA family. As to quaternary structure, composed of two chains; the small (or glutamine) chain promotes the hydrolysis of glutamine to ammonia, which is used by the large (or ammonia) chain to synthesize carbamoyl phosphate. Tetramer of heterodimers (alpha,beta)4.

The enzyme catalyses hydrogencarbonate + L-glutamine + 2 ATP + H2O = carbamoyl phosphate + L-glutamate + 2 ADP + phosphate + 2 H(+). The catalysed reaction is L-glutamine + H2O = L-glutamate + NH4(+). It functions in the pathway amino-acid biosynthesis; L-arginine biosynthesis; carbamoyl phosphate from bicarbonate: step 1/1. The protein operates within pyrimidine metabolism; UMP biosynthesis via de novo pathway; (S)-dihydroorotate from bicarbonate: step 1/3. Functionally, small subunit of the glutamine-dependent carbamoyl phosphate synthetase (CPSase). CPSase catalyzes the formation of carbamoyl phosphate from the ammonia moiety of glutamine, carbonate, and phosphate donated by ATP, constituting the first step of 2 biosynthetic pathways, one leading to arginine and/or urea and the other to pyrimidine nucleotides. The small subunit (glutamine amidotransferase) binds and cleaves glutamine to supply the large subunit with the substrate ammonia. In Sulfurisphaera tokodaii (strain DSM 16993 / JCM 10545 / NBRC 100140 / 7) (Sulfolobus tokodaii), this protein is Carbamoyl phosphate synthase small chain.